The chain runs to 60 residues: MGKIKVTKVKSAINRTKNQKLVLESLGLKKIGQTVEHDDTPNILGMVNKVKHLVSVEETK.

The protein belongs to the universal ribosomal protein uL30 family. Part of the 50S ribosomal subunit.

This chain is Large ribosomal subunit protein uL30, found in Christiangramia forsetii (strain DSM 17595 / CGMCC 1.15422 / KT0803) (Gramella forsetii).